The following is a 126-amino-acid chain: Phosphoribosyl-AMP cyclohydrolase (126 aa).

Residue Asp82 participates in Mg(2+) binding. Residue Cys83 coordinates Zn(2+). Residues Asp84 and Asp86 each coordinate Mg(2+). Cys99 and Cys106 together coordinate Zn(2+).

It belongs to the PRA-CH family. As to quaternary structure, homodimer. Mg(2+) is required as a cofactor. Zn(2+) serves as cofactor.

The protein localises to the cytoplasm. It carries out the reaction 1-(5-phospho-beta-D-ribosyl)-5'-AMP + H2O = 1-(5-phospho-beta-D-ribosyl)-5-[(5-phospho-beta-D-ribosylamino)methylideneamino]imidazole-4-carboxamide. The protein operates within amino-acid biosynthesis; L-histidine biosynthesis; L-histidine from 5-phospho-alpha-D-ribose 1-diphosphate: step 3/9. Its function is as follows. Catalyzes the hydrolysis of the adenine ring of phosphoribosyl-AMP. In Sphingopyxis alaskensis (strain DSM 13593 / LMG 18877 / RB2256) (Sphingomonas alaskensis), this protein is Phosphoribosyl-AMP cyclohydrolase.